Consider the following 397-residue polypeptide: Acylalkylpyrone synthase csyB (397 aa).

Residues K50 and 50-57 each bind CoA; that span reads KMLEINRK. C155 acts as the Nucleophile in catalysis. Substrate is bound at residue 214 to 215; the sequence is GD. Residues I267, G312, 312-315, Y314, and A315 each bind CoA; that span reads GGYA. The active site involves H377.

This sequence belongs to the thiolase-like superfamily. Chalcone/stilbene synthases family. Homodimer.

In terms of biological role, acylalkylpyrone synthase that catalyzes not only the polyketide chain elongation but also the one-pot condensation of two beta-ketoacyl units to produce the 3-acyl-4-hydroxy-6-alkyl-alpha-pyrone (AcAP) scaffold, a precursor of csypyrone B. The enzyme reaction is initiated by the loading of acetoacetyl-CoA onto Cys-155, and subsequent thioester bond cleavage by the nucleophilic water generates the beta-keto acid intermediate, which is placed within a pocket. The second beta-ketoacyl unit is then produced by polyketide chain elongation of fatty acyl-CoA with one molecule of malonyl-CoA, and the condensation with the beta-ketoacid generates the final products. Csypyrone B1 is the major product and contains a propanoic acid side-chain, whereas csypyrones B2 and B3 are minor compounds that contain butyric or pentanoic acid side-chains, respectively. In Aspergillus oryzae (strain ATCC 42149 / RIB 40) (Yellow koji mold), this protein is Acylalkylpyrone synthase csyB.